Here is a 130-residue protein sequence, read N- to C-terminus: Small ribosomal subunit protein uS8B (130 aa).

The protein belongs to the universal ribosomal protein uS8 family. In terms of assembly, component of the small ribosomal subunit (SSU). Mature yeast ribosomes consist of a small (40S) and a large (60S) subunit. The 40S small subunit contains 1 molecule of ribosomal RNA (18S rRNA) and 33 different proteins (encoded by 57 genes). The large 60S subunit contains 3 rRNA molecules (25S, 5.8S and 5S rRNA) and 46 different proteins (encoded by 81 genes).

Its subcellular location is the cytoplasm. In terms of biological role, component of the ribosome, a large ribonucleoprotein complex responsible for the synthesis of proteins in the cell. The small ribosomal subunit (SSU) binds messenger RNAs (mRNAs) and translates the encoded message by selecting cognate aminoacyl-transfer RNA (tRNA) molecules. The large subunit (LSU) contains the ribosomal catalytic site termed the peptidyl transferase center (PTC), which catalyzes the formation of peptide bonds, thereby polymerizing the amino acids delivered by tRNAs into a polypeptide chain. The nascent polypeptides leave the ribosome through a tunnel in the LSU and interact with protein factors that function in enzymatic processing, targeting, and the membrane insertion of nascent chains at the exit of the ribosomal tunnel. The sequence is that of Small ribosomal subunit protein uS8B from Saccharomyces cerevisiae (strain ATCC 204508 / S288c) (Baker's yeast).